A 338-amino-acid chain; its full sequence is MASGLGGLNKSPNGVVIGLAQLALPDPHTREALWMQTQKVVGMVAKARRSNPGMDLIVFPEYSLHGLSMSTAPEIMCSLDGPEVMALREACKTHRIWGCFSIMEANPHGNPFNSGLIVDDLGEIRLYYRKLHPWVPVEPWEPGDLGIPVCDGPRGSKLALIICHDGMFPEMARECAYKGADIMLRTAGYTAPIRHSWKITNQSNAFTNLMQTASVCMCGSDGTFDSMGEAMFVDFDGTIMAEGGGRADEIVCCELRPDLVREARVHWGVENNIYQFGHRGYVAVKGGARDCPYTYMHDLSAGRYRLPWEDDVVHTDGSSCGFAAPERDFKPTPGSWKE.

The region spanning 15-257 (VVIGLAQLAL…DEIVCCELRP (243 aa)) is the CN hydrolase domain. Glu-61 acts as the Proton acceptor in catalysis. Lys-130 (proton donor) is an active-site residue. The active-site Nucleophile is Cys-163.

This sequence belongs to the carbon-nitrogen hydrolase superfamily. Aliphatic amidase family.

The enzyme catalyses formamide + H2O = formate + NH4(+). In terms of biological role, is an aliphatic amidase with a restricted substrate specificity, as it only hydrolyzes formamide. The chain is Formamidase from Pseudomonas syringae pv. syringae (strain B728a).